Here is a 432-residue protein sequence, read N- to C-terminus: Adenylosuccinate synthetase (432 aa).

Residues 12 to 18 and 40 to 42 each bind GTP; these read GDEGKGK and GHT. Asp-13 functions as the Proton acceptor in the catalytic mechanism. Residues Asp-13 and Gly-40 each coordinate Mg(2+). IMP contacts are provided by residues 13 to 16, 38 to 41, Thr-130, Arg-144, Gln-225, Thr-240, and Arg-304; these read DEGK and NAGH. His-41 serves as the catalytic Proton donor. Position 300-306 (300-306) interacts with substrate; it reads STTGRPR. GTP contacts are provided by residues Arg-306, 332 to 334, and 414 to 416; these read KLD and SVG.

This sequence belongs to the adenylosuccinate synthetase family. In terms of assembly, homodimer. Mg(2+) is required as a cofactor.

It localises to the cytoplasm. The enzyme catalyses IMP + L-aspartate + GTP = N(6)-(1,2-dicarboxyethyl)-AMP + GDP + phosphate + 2 H(+). It participates in purine metabolism; AMP biosynthesis via de novo pathway; AMP from IMP: step 1/2. Functionally, plays an important role in the de novo pathway of purine nucleotide biosynthesis. Catalyzes the first committed step in the biosynthesis of AMP from IMP. In Citrifermentans bemidjiense (strain ATCC BAA-1014 / DSM 16622 / JCM 12645 / Bem) (Geobacter bemidjiensis), this protein is Adenylosuccinate synthetase.